We begin with the raw amino-acid sequence, 301 residues long: Glycine cleavage system transcriptional activator homolog (301 aa).

The region spanning 10 to 67 (PPLNSLKSFESAARYLSFTKAADELCVTQAAVSHQIKLLEXFLGIDLFKRKNRSLELT) is the HTH lysR-type domain. Positions 27–46 (FTKAADELCVTQAAVSHQIK) form a DNA-binding region, H-T-H motif.

This sequence belongs to the LysR transcriptional regulatory family.

It localises to the cytoplasm. Functionally, not known, the gcv operon regulated by the E.coli homolog does not exist in H.influenzae, so it probably acts as a transcriptional regulator on some other operon. The sequence is that of Glycine cleavage system transcriptional activator homolog (gcvA) from Haemophilus influenzae (strain ATCC 51907 / DSM 11121 / KW20 / Rd).